Reading from the N-terminus, the 274-residue chain is Hydroxyethylthiazole kinase (274 aa).

Met50 lines the substrate pocket. The ATP site is built by Arg126 and Ser171. Ala200 provides a ligand contact to substrate.

Belongs to the Thz kinase family. It depends on Mg(2+) as a cofactor.

It catalyses the reaction 5-(2-hydroxyethyl)-4-methylthiazole + ATP = 4-methyl-5-(2-phosphooxyethyl)-thiazole + ADP + H(+). Its pathway is cofactor biosynthesis; thiamine diphosphate biosynthesis; 4-methyl-5-(2-phosphoethyl)-thiazole from 5-(2-hydroxyethyl)-4-methylthiazole: step 1/1. Functionally, catalyzes the phosphorylation of the hydroxyl group of 4-methyl-5-beta-hydroxyethylthiazole (THZ). The sequence is that of Hydroxyethylthiazole kinase from Acinetobacter baylyi (strain ATCC 33305 / BD413 / ADP1).